A 397-amino-acid polypeptide reads, in one-letter code: Elongation factor Tu (397 aa).

The tr-type G domain maps to 10 to 207; sequence LPHCNVGTIG…TLDSYIPQPE (198 aa). Residues 19–26 form a G1 region; sequence GHVDHGKT. A GTP-binding site is contributed by 19–26; sequence GHVDHGKT. Position 26 (T26) interacts with Mg(2+). The segment at 60 to 64 is G2; the sequence is GITIN. The G3 stretch occupies residues 81–84; sequence DCPG. Residues 81-85 and 136-139 contribute to the GTP site; these read DCPGH and NKAD. The interval 136–139 is G4; that stretch reads NKAD. The G5 stretch occupies residues 174–176; that stretch reads SAR.

This sequence belongs to the TRAFAC class translation factor GTPase superfamily. Classic translation factor GTPase family. EF-Tu/EF-1A subfamily. As to quaternary structure, monomer.

Its subcellular location is the cytoplasm. It carries out the reaction GTP + H2O = GDP + phosphate + H(+). GTP hydrolase that promotes the GTP-dependent binding of aminoacyl-tRNA to the A-site of ribosomes during protein biosynthesis. This Pseudomonas syringae pv. tomato (strain ATCC BAA-871 / DC3000) protein is Elongation factor Tu.